Reading from the N-terminus, the 2345-residue chain is Acetyl-CoA carboxylase 1 (2345 aa).

Residue methionine 1 is modified to N-acetylmethionine. Serine 5, serine 23, serine 25, serine 29, serine 34, serine 47, serine 49, and serine 52 each carry phosphoserine. The residue at position 57 (threonine 57) is a Phosphothreonine. Serine 77 is modified (phosphoserine). Serine 79 is subject to Phosphoserine; by AMPK. One can recognise a Biotin carboxylation domain in the interval valine 116–alanine 617. Residues serine 274–methionine 465 enclose the ATP-grasp domain. Glycine 314–glycine 319 contacts ATP. Residues glutamate 423, glutamate 436, and asparagine 438 each coordinate Mg(2+). Mn(2+) contacts are provided by glutamate 423, glutamate 436, and asparagine 438. Arginine 440 is an active-site residue. A Phosphothreonine modification is found at threonine 609. The 75-residue stretch at phenylalanine 744–glutamine 818 folds into the Biotinyl-binding domain. Lysine 785 carries the post-translational modification N6-biotinyllysine. At serine 834 the chain carries Phosphoserine. 2 positions are modified to phosphoserine; by AMPK; in vitro: serine 1200 and serine 1215. Serine 1217 bears the Phosphoserine mark. Threonine 1226 bears the Phosphothreonine mark. Phosphoserine is present on residues serine 1258, serine 1262, and serine 1272. Lysine 1333 is subject to N6-acetyllysine. Residues proline 1575–asparagine 1913 enclose the CoA carboxyltransferase N-terminal domain. The segment at proline 1575–serine 2233 is carboxyltransferase. CoA-binding residues include arginine 1822, lysine 2126, and arginine 2128. Residues proline 1917–serine 2233 form the CoA carboxyltransferase C-terminal domain. Threonine 2152 is modified (phosphothreonine).

As to quaternary structure, monomer, homodimer, and homotetramer. Can form filamentous polymers. Interacts in its inactive phosphorylated form with the BRCT domains of BRCA1 which prevents ACACA dephosphorylation and inhibits lipid synthesis. Interacts with MID1IP1; interaction with MID1IP1 promotes oligomerization and increases its activity. Requires Mg(2+) as cofactor. Mn(2+) is required as a cofactor. The cofactor is biotin. In terms of processing, the N-terminus is blocked. Post-translationally, phosphorylation on Ser-1262 is required for interaction with BRCA1. Phosphorylation at Ser-79 by AMPK inactivates enzyme activity. Phosphorylated in vitro at Ser-1200 and Ser-1215 by AMPK; the relevance of phosphorylation of these sites in vivo is however unclear. In terms of processing, the biotin cofactor is covalently attached to the central biotinyl-binding domain and is required for the catalytic activity.

The protein localises to the cytoplasm. Its subcellular location is the cytosol. The catalysed reaction is hydrogencarbonate + acetyl-CoA + ATP = malonyl-CoA + ADP + phosphate + H(+). It functions in the pathway lipid metabolism; malonyl-CoA biosynthesis; malonyl-CoA from acetyl-CoA: step 1/1. Inhibited by phosphorylation. Citrate promotes oligomerization of the protein into filaments that correspond to the most active form of the carboxylase. Cytosolic enzyme that catalyzes the carboxylation of acetyl-CoA to malonyl-CoA, the first and rate-limiting step of de novo fatty acid biosynthesis. This is a 2 steps reaction starting with the ATP-dependent carboxylation of the biotin carried by the biotin carboxyl carrier (BCC) domain followed by the transfer of the carboxyl group from carboxylated biotin to acetyl-CoA. The sequence is that of Acetyl-CoA carboxylase 1 from Rattus norvegicus (Rat).